The primary structure comprises 357 residues: uncharacterized protein (357 aa).

Positions 6–32 (CIVCRQKKIKCDRKNPCTNCEQAGEKC) form a DNA-binding region, zn(2)-C6 fungal-type.

It localises to the nucleus. This is an uncharacterized protein from Schizosaccharomyces pombe (strain 972 / ATCC 24843) (Fission yeast).